The chain runs to 307 residues: Solute carrier family 25 member 53 (307 aa).

The tract at residues 1-23 is disordered; it reads MGEQNHSPGKELQHRTRAEAPGK. A compositionally biased stretch (basic and acidic residues) spans 8–22; the sequence is PGKELQHRTRAEAPG. 3 Solcar repeats span residues 25 to 105, 112 to 202, and 210 to 302; these read SWHS…LLCF, HTLG…IQDG, and HWVP…HSRK. A run of 6 helical transmembrane segments spans residues 31–51, 82–102, 112–132, 181–201, 215–235, and 269–290; these read YALG…IYKV, YPPL…YDSL, HTLG…AVAL, VLAR…PIQD, LVSG…LIVL, and IYRG…TTAI.

The protein belongs to the mitochondrial carrier (TC 2.A.29) family.

The protein resides in the mitochondrion inner membrane. The sequence is that of Solute carrier family 25 member 53 (SLC25A53) from Homo sapiens (Human).